Reading from the N-terminus, the 143-residue chain is uncharacterized protein (143 aa).

A disordered region spans residues 1–37 (MSAPASSSAIAPSQPTAPGHARHSASWSASASDPSGA).

This sequence belongs to the dynein light chain Tctex-type family.

This is an uncharacterized protein from Mycosarcoma maydis (Corn smut fungus).